The sequence spans 530 residues: UDP-N-acetylmuramoyl-L-alanyl-D-glutamate--2,6-diaminopimelate ligase (530 aa).

A UDP-N-acetyl-alpha-D-muramoyl-L-alanyl-D-glutamate-binding site is contributed by Leu52. Position 139–145 (139–145 (GTSGKTT)) interacts with ATP. UDP-N-acetyl-alpha-D-muramoyl-L-alanyl-D-glutamate is bound by residues 181–182 (TT), Ser208, and Arg216. At Lys248 the chain carries N6-carboxylysine. Meso-2,6-diaminopimelate is bound by residues Arg410, 434 to 437 (DNPR), Gly488, and Glu492. The Meso-diaminopimelate recognition motif signature appears at 434–437 (DNPR).

This sequence belongs to the MurCDEF family. MurE subfamily. It depends on Mg(2+) as a cofactor. In terms of processing, carboxylation is probably crucial for Mg(2+) binding and, consequently, for the gamma-phosphate positioning of ATP.

It is found in the cytoplasm. It catalyses the reaction UDP-N-acetyl-alpha-D-muramoyl-L-alanyl-D-glutamate + meso-2,6-diaminopimelate + ATP = UDP-N-acetyl-alpha-D-muramoyl-L-alanyl-gamma-D-glutamyl-meso-2,6-diaminopimelate + ADP + phosphate + H(+). Its pathway is cell wall biogenesis; peptidoglycan biosynthesis. Its function is as follows. Catalyzes the addition of meso-diaminopimelic acid to the nucleotide precursor UDP-N-acetylmuramoyl-L-alanyl-D-glutamate (UMAG) in the biosynthesis of bacterial cell-wall peptidoglycan. The polypeptide is UDP-N-acetylmuramoyl-L-alanyl-D-glutamate--2,6-diaminopimelate ligase (Mycobacterium leprae (strain TN)).